The chain runs to 527 residues: MSSNKNQSDLNIPTNSASLKQKQRQQLGIKSEIGASTSDVYDPQVASYLSAGDSPSQFANTALHHSNSVGYSASAAAAAAELQHRAELQRRQQQLQQQELQHQQEQLQQYRQAQAQAQAQAQAQREHQQLQHAYQQQQQLHQLGQLSQQLAQPHLSQHEHVRDALTTDEFDTNEDLRSRYIENEIVKTFNSKAELVHFVKNELGPEERCKIVINSSKPKAVYFQCERSGSFRTTVKDATKRQRIAYTKRNKCAYRLVANLYPNEKDQKRKNKPDEPGHNEENSRISEMWVLRMINPQHNHAPDPINKKKRQKTSRTLVEKPINKPHHHHLLQQEQQQQQQQQQQQQQQQQQQQHNANSQAQQQAAQLQQQMQQQLQASGLPTTPNYSELLGQLGQLSQQQSQQQQLHHIPQQRQRTQSQQSQQQPQQTAHGLDQPDAAVIAAIEASAAAAVASQGSPNVTAAAVAALQHTQGNEHDAQQQQDRGGNNGGAIDSNVDPSLDPNVDPNVQAHDHSHGLRNSYGKRSGFL.

Disordered regions lie at residues Met-1 to Ser-36, Ala-258 to Glu-281, His-328 to Ala-365, Gln-395 to Asp-433, and Thr-470 to Leu-527. The DNA-binding element occupies His-160–His-300. Residues Asn-263–Glu-281 show a composition bias toward basic and acidic residues. Low complexity-rich tracts occupy residues Gln-332 to Ala-365 and Gln-395 to Thr-428.

It belongs to the RBF1 family.

Its subcellular location is the nucleus. It localises to the chromosome. It is found in the telomere. Transcriptional activator that binds to the RPG box and to telomeres. Involved in the regulation of the transition between yeast and filamentous forms and plays a role in virulence. Induces expression of HWP1, a major hyphal cell protein and virulence factor. This is Transcription factor RBF1 (RBF1) from Candida albicans (Yeast).